An 834-amino-acid chain; its full sequence is MAP kinase phosphatase with leucine-rich repeats protein 1 (834 aa).

A disordered region spans residues 1–103 (MIFKKLFSKG…GSGTTKESKK (103 aa)). Residues 36–78 (GSGTNTNGLSNSTTNPSSIHSTPTTPTTTASTNLTNSNKLSTL) show a composition bias toward low complexity. Positions 79-98 (APITNGNRSLRGSKDGSGTT) are enriched in polar residues. LRR repeat units lie at residues 160 to 181 (ELRSLILDFNKITEIPEQIGLL), 183 to 204 (NLKHLSLAANQLSQVPEFLSQL), 206 to 226 (SLESLELGINQFTSFPLNICK), 229 to 251 (SLTLLRLETNNIKSLPDDFINLE), 252 to 273 (NLKDLSLLDNQLKEIPDSLPNN), 274 to 292 (IEKLNLGCNDIINSYSKSL), 298 to 319 (SLTTLNLSENKIEVLDESLSCL), 321 to 342 (NVKTLILDCNMIKVIPGSVLGS), 345 to 366 (SLVTLNLPHNFISDLPAEIVTL), and 368 to 389 (NLRIIDLRGNNFEFCKNYPSSE). The disordered stretch occupies residues 503–584 (YEKQENDENN…ENPLKESQGK (82 aa)). A compositionally biased stretch (polar residues) spans 511-536 (NNSVTLETTTTISIASDNTDEASIQI). 2 stretches are compositionally biased toward basic and acidic residues: residues 538–554 (QKEDGDKENLENDDKLL) and 569–582 (KQQEQQENPLKESQ). Residues 555–615 (QESFSENNNN…IRLEKIKYQE (61 aa)) are a coiled coil. The 140-residue stretch at 695–834 (VPDLIIDKLY…LKKFEKDLSK (140 aa)) folds into the Tyrosine-protein phosphatase domain. The active-site Phosphocysteine intermediate is the Cys778.

The protein belongs to the protein-tyrosine phosphatase family. Non-receptor class dual specificity subfamily.

The catalysed reaction is O-phospho-L-tyrosyl-[protein] + H2O = L-tyrosyl-[protein] + phosphate. It catalyses the reaction O-phospho-L-seryl-[protein] + H2O = L-seryl-[protein] + phosphate. The enzyme catalyses O-phospho-L-threonyl-[protein] + H2O = L-threonyl-[protein] + phosphate. In terms of biological role, probable phosphatase with dual specificity toward Ser/Thr and Tyr-containing proteins. Dephosphorylates pNPP, in vitro. Essential for proper regulation of erkB (erk2) and optimal motility during development. This is MAP kinase phosphatase with leucine-rich repeats protein 1 (mpl1) from Dictyostelium discoideum (Social amoeba).